We begin with the raw amino-acid sequence, 334 residues long: MATVQQKLITPVSQERSDASRNKVTVVGVGQVGMACAVSILLRELTDEIALVDVLEDKLKGEMMDLLHGSLFLKTPKIMANKDYGITANSRVVVVTAGARQQEGESRLNLVQRNVNIFKFIIPQIVKYSPNCTIIVVSNPVDILTYVTWKISGFPKNRVIGSGCNLDSARFRYLMAEKLGLHPSSCHGWVLGEHGDSSVPVWSGVNVAGVGLQQLNPDIGTAQDKENWKDVHKMVVESAYEVIKLKGYTNWAIGLSVAELTESMVKNLKRVHPVSTMVKGMYGIENEVFLSLPCVLSADGLIDVINQMLKDDEVAQLRKSAETLWNIQKELKDL.

Residues 30–58 (GQVG…LEDK) and Arg100 contribute to the NAD(+) site. Substrate-binding residues include Arg107, Asn139, and Arg170. Asn139 contributes to the NAD(+) binding site. The Proton acceptor role is filled by His194. Thr249 provides a ligand contact to substrate.

Belongs to the LDH/MDH superfamily. LDH family. As to quaternary structure, homotetramer.

The protein resides in the cytoplasm. It catalyses the reaction (S)-lactate + NAD(+) = pyruvate + NADH + H(+). It participates in fermentation; pyruvate fermentation to lactate; (S)-lactate from pyruvate: step 1/1. Interconverts simultaneously and stereospecifically pyruvate and lactate with concomitant interconversion of NADH and NAD(+). In Squalus acanthias (Spiny dogfish), this protein is L-lactate dehydrogenase B chain (ldhb).